The sequence spans 399 residues: S-adenosylmethionine synthase (399 aa).

Histidine 16 is an ATP binding site. Position 18 (aspartate 18) interacts with Mg(2+). K(+) is bound at residue glutamate 44. Residues glutamate 57 and glutamine 100 each coordinate L-methionine. The interval 100–110 (QSPDIAQGVDT) is flexible loop. ATP is bound by residues 175–177 (DGK), 246–247 (KF), aspartate 255, 261–262 (RK), alanine 278, and lysine 282. Position 255 (aspartate 255) interacts with L-methionine. Lysine 286 lines the L-methionine pocket. Lysine 341 is covalently cross-linked (Isoglutamyl lysine isopeptide (Lys-Gln) (interchain with Q-Cter in protein Pup)).

It belongs to the AdoMet synthase family. Homotetramer; dimer of dimers. The cofactor is Mg(2+). Requires K(+) as cofactor.

It is found in the cytoplasm. It carries out the reaction L-methionine + ATP + H2O = S-adenosyl-L-methionine + phosphate + diphosphate. It participates in amino-acid biosynthesis; S-adenosyl-L-methionine biosynthesis; S-adenosyl-L-methionine from L-methionine: step 1/1. Catalyzes the formation of S-adenosylmethionine (AdoMet) from methionine and ATP. The overall synthetic reaction is composed of two sequential steps, AdoMet formation and the subsequent tripolyphosphate hydrolysis which occurs prior to release of AdoMet from the enzyme. The polypeptide is S-adenosylmethionine synthase (Mycolicibacterium smegmatis (strain ATCC 700084 / mc(2)155) (Mycobacterium smegmatis)).